Here is a 26-residue protein sequence, read N- to C-terminus: MSDTATRVQKIVVEHLGVESDKVTQE.

The Carrier domain occupies 2 to 26; that stretch reads SDTATRVQKIVVEHLGVESDKVTQE.

It belongs to the acyl carrier protein (ACP) family. 4'-phosphopantetheine is transferred from CoA to a specific serine of apo-ACP by AcpS. This modification is essential for activity because fatty acids are bound in thioester linkage to the sulfhydryl of the prosthetic group.

It is found in the cytoplasm. The protein operates within lipid metabolism; fatty acid biosynthesis. In terms of biological role, carrier of the growing fatty acid chain in fatty acid biosynthesis. This chain is Acyl carrier protein (acpP), found in Erythrobacter longus.